The chain runs to 258 residues: Ribosomal RNA small subunit methyltransferase A (258 aa).

H13, L15, G40, E61, D86, and N106 together coordinate S-adenosyl-L-methionine.

It belongs to the class I-like SAM-binding methyltransferase superfamily. rRNA adenine N(6)-methyltransferase family. RsmA subfamily.

It localises to the cytoplasm. The enzyme catalyses adenosine(1518)/adenosine(1519) in 16S rRNA + 4 S-adenosyl-L-methionine = N(6)-dimethyladenosine(1518)/N(6)-dimethyladenosine(1519) in 16S rRNA + 4 S-adenosyl-L-homocysteine + 4 H(+). Specifically dimethylates two adjacent adenosines (A1518 and A1519) in the loop of a conserved hairpin near the 3'-end of 16S rRNA in the 30S particle. May play a critical role in biogenesis of 30S subunits. The polypeptide is Ribosomal RNA small subunit methyltransferase A (Coxiella burnetii (strain CbuG_Q212) (Coxiella burnetii (strain Q212))).